The sequence spans 337 residues: Phosphate acyltransferase (337 aa).

It belongs to the PlsX family. Homodimer. Probably interacts with PlsY.

Its subcellular location is the cytoplasm. It carries out the reaction a fatty acyl-[ACP] + phosphate = an acyl phosphate + holo-[ACP]. Its pathway is lipid metabolism; phospholipid metabolism. Functionally, catalyzes the reversible formation of acyl-phosphate (acyl-PO(4)) from acyl-[acyl-carrier-protein] (acyl-ACP). This enzyme utilizes acyl-ACP as fatty acyl donor, but not acyl-CoA. The polypeptide is Phosphate acyltransferase (Halalkalibacterium halodurans (strain ATCC BAA-125 / DSM 18197 / FERM 7344 / JCM 9153 / C-125) (Bacillus halodurans)).